Consider the following 504-residue polypeptide: ATP synthase subunit alpha (504 aa).

172–179 (GDRQTGKT) is a binding site for ATP.

This sequence belongs to the ATPase alpha/beta chains family. F-type ATPases have 2 components, CF(1) - the catalytic core - and CF(0) - the membrane proton channel. CF(1) has five subunits: alpha(3), beta(3), gamma(1), delta(1), epsilon(1). CF(0) has three main subunits: a(1), b(2) and c(9-12). The alpha and beta chains form an alternating ring which encloses part of the gamma chain. CF(1) is attached to CF(0) by a central stalk formed by the gamma and epsilon chains, while a peripheral stalk is formed by the delta and b chains.

The protein localises to the cell inner membrane. It catalyses the reaction ATP + H2O + 4 H(+)(in) = ADP + phosphate + 5 H(+)(out). Functionally, produces ATP from ADP in the presence of a proton gradient across the membrane. The alpha chain is a regulatory subunit. In Petrotoga mobilis (strain DSM 10674 / SJ95), this protein is ATP synthase subunit alpha.